A 449-amino-acid polypeptide reads, in one-letter code: SUPPRESSOR OF GAMMA RESPONSE 1 (449 aa).

Residues 58–211 (LPRGVKFDPS…DYVVSKIFYQ (154 aa)) enclose the NAC domain. Residues 167–217 (RGCKKIMVLYGGKAVKTNWVMHQYHLGIEEDEKEGDYVVSKIFYQQPQQLV) mediate DNA binding. Residues 324 to 336 (DDKEEQEKDRDNE) are compositionally biased toward basic and acidic residues. The interval 324-348 (DDKEEQEKDRDNENQGEEDPTWFDS) is disordered.

Post-translationally, phosphorylated in a DNA stress-independent manner. Hyperphosphorylated on SQ motifs upon double-strand breaks, H(2)O(2) or zeocin treatments. Hyperphosphorylation is required for SOG1 function, and unlike constitutive phosphorylation, is ATM dependent. In terms of tissue distribution, expressed in shoot and root apical meristems, in lateral root primordia, in the vasculature of young leaves and in the root stele.

It is found in the nucleus. Functionally, transcription factor regulating the transcriptional activation response to gamma irradiation. Required for stem-cell death induced by UVB or by gamma irradiation. Not required for ATM activation, but participates in pathways governed by both ATM and ATR sensor kinases. Involved in DNA damage response (DDR) system that regulates cell cycle arrest. Functional homolog of animal p53. Regulates SMR5 and SMR7 transcription. Regulates DNA repair and cytokinin signaling separately and plays a key role in controlling lateral root formation under genotoxic stress. This Arabidopsis thaliana (Mouse-ear cress) protein is SUPPRESSOR OF GAMMA RESPONSE 1.